The sequence spans 364 residues: Doublecortin domain-containing protein 2C (364 aa).

2 consecutive Doublecortin domains span residues Lys16–Ile98 and Arg136–Trp217. A disordered region spans residues Val233 to Gly255.

Expressed in testis and spermatozoa (at protein level).

It is found in the cell projection. The protein localises to the cilium. Its subcellular location is the flagellum. The protein resides in the cytoplasm. The polypeptide is Doublecortin domain-containing protein 2C (Homo sapiens (Human)).